The primary structure comprises 262 residues: Indole-3-glycerol phosphate synthase (262 aa).

The protein belongs to the TrpC family.

The enzyme catalyses 1-(2-carboxyphenylamino)-1-deoxy-D-ribulose 5-phosphate + H(+) = (1S,2R)-1-C-(indol-3-yl)glycerol 3-phosphate + CO2 + H2O. It functions in the pathway amino-acid biosynthesis; L-tryptophan biosynthesis; L-tryptophan from chorismate: step 4/5. This chain is Indole-3-glycerol phosphate synthase, found in Clostridium acetobutylicum (strain ATCC 824 / DSM 792 / JCM 1419 / IAM 19013 / LMG 5710 / NBRC 13948 / NRRL B-527 / VKM B-1787 / 2291 / W).